The following is a 118-amino-acid chain: Large ribosomal subunit protein bL17 (118 aa).

It belongs to the bacterial ribosomal protein bL17 family. Part of the 50S ribosomal subunit. Contacts protein L32.

This Onion yellows phytoplasma (strain OY-M) protein is Large ribosomal subunit protein bL17.